The chain runs to 154 residues: UPF0756 membrane protein BLi03063/BL00400 (154 aa).

4 helical membrane passes run 8–28 (FLIL…IIAV), 54–74 (WGVT…EIGF), 87–107 (WIAL…ITLL), and 117–137 (LVFG…GPLI).

This sequence belongs to the UPF0756 family.

Its subcellular location is the cell membrane. This is UPF0756 membrane protein BLi03063/BL00400 from Bacillus licheniformis (strain ATCC 14580 / DSM 13 / JCM 2505 / CCUG 7422 / NBRC 12200 / NCIMB 9375 / NCTC 10341 / NRRL NRS-1264 / Gibson 46).